A 105-amino-acid polypeptide reads, in one-letter code: DNA-binding transcriptional regulator BolA (105 aa).

Belongs to the BolA/IbaG family.

Transcriptional regulator that plays an important role in general stress response. Has many effects on cell morphology, cell growth and cell division. Acts by regulating the transcription of many genes, including dacA (PBP-5), dacC (PBP-6), ampC and mreB. Probably involved in the coordination of genes that adapt the cell physiology in order to enhance cell adaptation and survival under stress conditions. Essential for normal cell morphology in stationary phase and under conditions of starvation. Also regulates a complex network of genes encoding proteins related to biofilm development, and negatively modulates flagellar biosynthesis and swimming capacity. Could be a motile/adhesive transcriptional switch, specifically involved in the transition between the planktonic and the attachment stage of biofilm formation. Overexpression produces round cell shape, impairs cell growth rate and induces biofilm development. This is DNA-binding transcriptional regulator BolA from Escherichia coli (strain K12).